Here is a 298-residue protein sequence, read N- to C-terminus: Ketohexokinase (298 aa).

Residues Asp-15, Gly-41, Asn-42, and Asn-45 each coordinate beta-D-fructose. ATP contacts are provided by residues Arg-108, 226–229 (AEEG), and 255–258 (GAGD). Asp-258 serves as a coordination point for beta-D-fructose.

It belongs to the carbohydrate kinase PfkB family. Homodimer. Most abundant in liver, kidney, gut, spleen and pancreas. Low levels also found in adrenal, muscle, brain and eye.

It catalyses the reaction beta-D-fructose + ATP = beta-D-fructose 1-phosphate + ADP + H(+). Its pathway is carbohydrate metabolism; fructose metabolism. Its activity is regulated as follows. Requires potassium. Inhibition by ADP. Catalyzes the phosphorylation of the ketose sugar fructose to fructose-1-phosphate. This chain is Ketohexokinase, found in Homo sapiens (Human).